Consider the following 247-residue polypeptide: Probable transcriptional regulatory protein SynWH7803_1972 (247 aa).

This sequence belongs to the TACO1 family.

The protein localises to the cytoplasm. The chain is Probable transcriptional regulatory protein SynWH7803_1972 from Synechococcus sp. (strain WH7803).